We begin with the raw amino-acid sequence, 522 residues long: Maturase K (522 aa).

The protein belongs to the intron maturase 2 family. MatK subfamily.

It localises to the plastid. The protein localises to the chloroplast. Functionally, usually encoded in the trnK tRNA gene intron. Probably assists in splicing its own and other chloroplast group II introns. This is Maturase K from Iris orientalis (Yellowband iris).